A 379-amino-acid chain; its full sequence is Homoserine O-acetyltransferase (379 aa).

The AB hydrolase-1 domain maps to 52–356 (NVVVVLHALT…VYGHDGFLVE (305 aa)). The active-site Nucleophile is the Ser-157. Arg-227 is a substrate binding site. Residues Asp-320 and His-350 contribute to the active site. Residue Asp-351 participates in substrate binding.

It belongs to the AB hydrolase superfamily. MetX family. Homodimer.

The protein resides in the cytoplasm. The catalysed reaction is L-homoserine + acetyl-CoA = O-acetyl-L-homoserine + CoA. It participates in amino-acid biosynthesis; L-methionine biosynthesis via de novo pathway; O-acetyl-L-homoserine from L-homoserine: step 1/1. In terms of biological role, transfers an acetyl group from acetyl-CoA to L-homoserine, forming acetyl-L-homoserine. The chain is Homoserine O-acetyltransferase from Mycobacterium tuberculosis (strain CDC 1551 / Oshkosh).